Consider the following 71-residue polypeptide: Large ribosomal subunit protein bL31 (71 aa).

4 residues coordinate Zn(2+): Cys-16, Cys-18, Cys-37, and Cys-40.

It belongs to the bacterial ribosomal protein bL31 family. Type A subfamily. Part of the 50S ribosomal subunit. The cofactor is Zn(2+).

Its function is as follows. Binds the 23S rRNA. This is Large ribosomal subunit protein bL31 from Pseudoalteromonas translucida (strain TAC 125).